The chain runs to 328 residues: Biotin synthase (328 aa).

The Radical SAM core domain maps to 48–275 (NRIQLSKLLN…KSHVRLTAGR (228 aa)). [4Fe-4S] cluster-binding residues include cysteine 63, cysteine 67, and cysteine 70. [2Fe-2S] cluster contacts are provided by cysteine 107, cysteine 138, cysteine 198, and arginine 270.

Belongs to the radical SAM superfamily. Biotin synthase family. As to quaternary structure, homodimer. It depends on [4Fe-4S] cluster as a cofactor. [2Fe-2S] cluster serves as cofactor.

It catalyses the reaction (4R,5S)-dethiobiotin + (sulfur carrier)-SH + 2 reduced [2Fe-2S]-[ferredoxin] + 2 S-adenosyl-L-methionine = (sulfur carrier)-H + biotin + 2 5'-deoxyadenosine + 2 L-methionine + 2 oxidized [2Fe-2S]-[ferredoxin]. The protein operates within cofactor biosynthesis; biotin biosynthesis; biotin from 7,8-diaminononanoate: step 2/2. Functionally, catalyzes the conversion of dethiobiotin (DTB) to biotin by the insertion of a sulfur atom into dethiobiotin via a radical-based mechanism. This chain is Biotin synthase, found in Brucella abortus (strain S19).